A 125-amino-acid polypeptide reads, in one-letter code: Small ribosomal subunit protein uS13 (125 aa).

The protein belongs to the universal ribosomal protein uS13 family. In terms of assembly, part of the 30S ribosomal subunit. Forms a loose heterodimer with protein S19. Forms two bridges to the 50S subunit in the 70S ribosome.

Located at the top of the head of the 30S subunit, it contacts several helices of the 16S rRNA. In the 70S ribosome it contacts the 23S rRNA (bridge B1a) and protein L5 of the 50S subunit (bridge B1b), connecting the 2 subunits; these bridges are implicated in subunit movement. Contacts the tRNAs in the A and P-sites. This Rickettsia bellii (strain OSU 85-389) protein is Small ribosomal subunit protein uS13.